The chain runs to 127 residues: Large ribosomal subunit protein bL17 (127 aa).

It belongs to the bacterial ribosomal protein bL17 family. In terms of assembly, part of the 50S ribosomal subunit. Contacts protein L32.

The polypeptide is Large ribosomal subunit protein bL17 (Fervidobacterium nodosum (strain ATCC 35602 / DSM 5306 / Rt17-B1)).